Reading from the N-terminus, the 474-residue chain is Glutamate--tRNA ligase 1 (474 aa).

The short motif at 11 to 21 is the 'HIGH' region element; the sequence is PSPTGFLHIGG. The span at 113 to 133 shows a compositional bias: basic and acidic residues; sequence TARAEGRAPRYDGRWRDRDPS. The tract at residues 113–136 is disordered; it reads TARAEGRAPRYDGRWRDRDPSEAP. The 'KMSKS' region signature appears at 240–244; the sequence is KLSKR. Position 243 (K243) interacts with ATP.

This sequence belongs to the class-I aminoacyl-tRNA synthetase family. Glutamate--tRNA ligase type 1 subfamily. Monomer.

The protein resides in the cytoplasm. It carries out the reaction tRNA(Glu) + L-glutamate + ATP = L-glutamyl-tRNA(Glu) + AMP + diphosphate. Functionally, catalyzes the attachment of glutamate to tRNA(Glu) in a two-step reaction: glutamate is first activated by ATP to form Glu-AMP and then transferred to the acceptor end of tRNA(Glu). The sequence is that of Glutamate--tRNA ligase 1 from Methylorubrum extorquens (strain PA1) (Methylobacterium extorquens).